The primary structure comprises 141 residues: Ribonuclease P protein component (141 aa).

2 disordered regions span residues 37–56 (RTEEESNAAKTGDNPRVGFT) and 114–141 (RRITAKGERRSGGKRRTERPEPGPVNGK). A compositionally biased stretch (basic and acidic residues) spans 114–124 (RRITAKGERRS).

It belongs to the RnpA family. As to quaternary structure, consists of a catalytic RNA component (M1 or rnpB) and a protein subunit.

The enzyme catalyses Endonucleolytic cleavage of RNA, removing 5'-extranucleotides from tRNA precursor.. Functionally, RNaseP catalyzes the removal of the 5'-leader sequence from pre-tRNA to produce the mature 5'-terminus. It can also cleave other RNA substrates such as 4.5S RNA. The protein component plays an auxiliary but essential role in vivo by binding to the 5'-leader sequence and broadening the substrate specificity of the ribozyme. In Brucella melitensis biotype 2 (strain ATCC 23457), this protein is Ribonuclease P protein component.